The chain runs to 187 residues: UPF0200 protein MA_4660 (187 aa).

9–16 is an ATP binding site; it reads GMPASGKS.

The protein belongs to the UPF0200 family.

The chain is UPF0200 protein MA_4660 from Methanosarcina acetivorans (strain ATCC 35395 / DSM 2834 / JCM 12185 / C2A).